The sequence spans 64 residues: Large ribosomal subunit protein bL35 (64 aa).

A disordered region spans residues 1 to 28 (MPKVKTKSGAKKRFKLTGSGKIKRKSAY).

This sequence belongs to the bacterial ribosomal protein bL35 family.

This Cytophaga hutchinsonii (strain ATCC 33406 / DSM 1761 / CIP 103989 / NBRC 15051 / NCIMB 9469 / D465) protein is Large ribosomal subunit protein bL35.